The following is a 122-amino-acid chain: Small ribosomal subunit protein uS13 (122 aa).

The segment covering 95-116 (GLPVRGQKTKTNARTRKGRRKT) has biased composition (basic residues). The interval 95 to 122 (GLPVRGQKTKTNARTRKGRRKTVGAATK) is disordered.

This sequence belongs to the universal ribosomal protein uS13 family. As to quaternary structure, part of the 30S ribosomal subunit. Forms a loose heterodimer with protein S19. Forms two bridges to the 50S subunit in the 70S ribosome.

Functionally, located at the top of the head of the 30S subunit, it contacts several helices of the 16S rRNA. In the 70S ribosome it contacts the 23S rRNA (bridge B1a) and protein L5 of the 50S subunit (bridge B1b), connecting the 2 subunits; these bridges are implicated in subunit movement. Contacts the tRNAs in the A and P-sites. This chain is Small ribosomal subunit protein uS13, found in Campylobacter curvus (strain 525.92).